Consider the following 149-residue polypeptide: Detocs response regulatory protein DtcB (149 aa).

The region spanning 1 to 134 is the Response regulatory domain; the sequence is MILIVEDDAH…DIEACYYDHN (134 aa). D53 bears the 4-aspartylphosphate mark.

Post-translationally, probably phosphorylated by DtcA.

Possible phosphate scavenger member of the two-component regulatory system Detocs that confers resistance to bacteriophage. When the system (DtcA-DtcB-DtcC) is expressed in a susceptible E.coli (strain MG1655) it confers resistance to bacteriophages T2, T4, T5, T6 and SECphi27. Detocs inhibits T5 infection leading to growth arrest but not complete cell lysis, during SECphi27 infection leads to cell lysis. Overexpression of this protein along with the intact Detocs locus cancels T5 immunity; when the phosphate-receiving Asp-53 is mutated to Ala in this protein, immunity is restored. DtcA probably autophosphorylates upon sensing viral infection, and subsequently transfers the phosphate signal to DtcC which activates it, leading to an antiviral defense; DtcB (this subunit) may scavenge phosphorylation signals from accidental activation of DtcA. This is Detocs response regulatory protein DtcB from Vibrio alginolyticus.